A 273-amino-acid polypeptide reads, in one-letter code: Homeobox protein Nkx-2.2 (273 aa).

Disordered regions lie at residues 1-56 (MSLT…LDAV) and 91-131 (AASA…KRKR). The segment covering 20-38 (DTNDEEGSVAEGPEEESEG) has biased composition (acidic residues). A DNA-binding region (homeobox) is located at residues 128–187 (KRKRRVLFSKAQTYELERRFRQQRYLSAPEREHLASLIRLTPTQVKIWFQNHRYKMKRAR).

Belongs to the NK-2 homeobox family. In terms of assembly, interacts with OLIG2.

It is found in the nucleus. Functionally, transcriptional activator involved in the development of insulin-producting beta cells in the endocrine pancreas. May also be involved in specifying diencephalic neuromeric boundaries, and in controlling the expression of genes that play a role in axonal guidance. Binds to elements within the NEUROD1 promoter. The sequence is that of Homeobox protein Nkx-2.2 (NKX2-2) from Mesocricetus auratus (Golden hamster).